The primary structure comprises 425 residues: tRNA(Met) cytidine acetate ligase (425 aa).

Residues 7 to 20 (VVEYNPFHFGHLHH), glycine 102, asparagine 162, and 187 to 188 (RI) each bind ATP.

It belongs to the TmcAL family.

The protein resides in the cytoplasm. It carries out the reaction cytidine(34) in elongator tRNA(Met) + acetate + ATP = N(4)-acetylcytidine(34) in elongator tRNA(Met) + AMP + diphosphate. Its function is as follows. Catalyzes the formation of N(4)-acetylcytidine (ac(4)C) at the wobble position of elongator tRNA(Met), using acetate and ATP as substrates. First activates an acetate ion to form acetyladenylate (Ac-AMP) and then transfers the acetyl group to tRNA to form ac(4)C34. This Fervidobacterium nodosum (strain ATCC 35602 / DSM 5306 / Rt17-B1) protein is tRNA(Met) cytidine acetate ligase.